The following is a 412-amino-acid chain: 8-amino-7-oxononanoate synthase (412 aa).

Residue R28 participates in substrate binding. Pyridoxal 5'-phosphate is bound at residue 115–116 (GY). A substrate-binding site is contributed by H140. Pyridoxal 5'-phosphate contacts are provided by S186, H214, and T246. K249 is modified (N6-(pyridoxal phosphate)lysine). Substrate is bound at residue T367.

This sequence belongs to the class-II pyridoxal-phosphate-dependent aminotransferase family. BioF subfamily. In terms of assembly, homodimer. Requires pyridoxal 5'-phosphate as cofactor.

It catalyses the reaction 6-carboxyhexanoyl-[ACP] + L-alanine + H(+) = (8S)-8-amino-7-oxononanoate + holo-[ACP] + CO2. The protein operates within cofactor biosynthesis; biotin biosynthesis. Its function is as follows. Catalyzes the decarboxylative condensation of pimeloyl-[acyl-carrier protein] and L-alanine to produce 8-amino-7-oxononanoate (AON), [acyl-carrier protein], and carbon dioxide. This chain is 8-amino-7-oxononanoate synthase, found in Paracidovorax citrulli (strain AAC00-1) (Acidovorax citrulli).